The sequence spans 95 residues: Co-chaperonin GroES (95 aa).

This sequence belongs to the GroES chaperonin family. Heptamer of 7 subunits arranged in a ring. Interacts with the chaperonin GroEL.

The protein localises to the cytoplasm. Its function is as follows. Together with the chaperonin GroEL, plays an essential role in assisting protein folding. The GroEL-GroES system forms a nano-cage that allows encapsulation of the non-native substrate proteins and provides a physical environment optimized to promote and accelerate protein folding. GroES binds to the apical surface of the GroEL ring, thereby capping the opening of the GroEL channel. The protein is Co-chaperonin GroES of Syntrophotalea carbinolica (strain DSM 2380 / NBRC 103641 / GraBd1) (Pelobacter carbinolicus).